Reading from the N-terminus, the 286-residue chain is Probable transport system permease protein NifC (286 aa).

6 helical membrane-spanning segments follow: residues 34-54 (LFLA…ISMI), 75-95 (IILS…IGTP), 114-134 (IFVE…LLLA), 152-172 (VIFT…ALYV), 216-236 (GLIL…MFAG), and 257-277 (IKMA…LLLL). Positions 75–278 (IILSFVTSLI…IMTFVLLLLV (204 aa)) constitute an ABC transmembrane type-1 domain.

It belongs to the binding-protein-dependent transport system permease family. CysTW subfamily.

The protein resides in the cell membrane. Functionally, may be involved in molybdenum transport. The chain is Probable transport system permease protein NifC (nifC) from Clostridium pasteurianum.